A 395-amino-acid chain; its full sequence is Glutamyl-tRNA reductase (395 aa).

Substrate contacts are provided by residues 45-48, S87, 92-94, and Q98; these read TCNR and EDQ. Residue C46 is the Nucleophile of the active site. An NADP(+)-binding site is contributed by 167–172; that stretch reads GAGEMG.

It belongs to the glutamyl-tRNA reductase family. In terms of assembly, homodimer.

The enzyme catalyses (S)-4-amino-5-oxopentanoate + tRNA(Glu) + NADP(+) = L-glutamyl-tRNA(Glu) + NADPH + H(+). It participates in porphyrin-containing compound metabolism; protoporphyrin-IX biosynthesis; 5-aminolevulinate from L-glutamyl-tRNA(Glu): step 1/2. Catalyzes the NADPH-dependent reduction of glutamyl-tRNA(Glu) to glutamate 1-semialdehyde (GSA). The polypeptide is Glutamyl-tRNA reductase (Methanosphaera stadtmanae (strain ATCC 43021 / DSM 3091 / JCM 11832 / MCB-3)).